A 206-amino-acid chain; its full sequence is Large ribosomal subunit protein uL4 (206 aa).

Positions 45–76 (RQGTQSAKTRTEVSGGGIKPWRQKGTGRARQG) are disordered.

It belongs to the universal ribosomal protein uL4 family. In terms of assembly, part of the 50S ribosomal subunit.

In terms of biological role, one of the primary rRNA binding proteins, this protein initially binds near the 5'-end of the 23S rRNA. It is important during the early stages of 50S assembly. It makes multiple contacts with different domains of the 23S rRNA in the assembled 50S subunit and ribosome. Forms part of the polypeptide exit tunnel. This is Large ribosomal subunit protein uL4 from Clostridium acetobutylicum (strain ATCC 824 / DSM 792 / JCM 1419 / IAM 19013 / LMG 5710 / NBRC 13948 / NRRL B-527 / VKM B-1787 / 2291 / W).